Here is a 510-residue protein sequence, read N- to C-terminus: Maturase K (510 aa).

This sequence belongs to the intron maturase 2 family. MatK subfamily.

The protein resides in the plastid. Its subcellular location is the chloroplast. Its function is as follows. Usually encoded in the trnK tRNA gene intron. Probably assists in splicing its own and other chloroplast group II introns. This chain is Maturase K, found in Mammillaria haageana (Cactus).